Reading from the N-terminus, the 375-residue chain is Chaperone protein DnaJ (375 aa).

Positions 5 to 70 (DYYEVLGVAR…NKRRAYDAHG (66 aa)) constitute a J domain. A CR-type zinc finger spans residues 131–208 (GIERRIEIPT…CHGAGRVEED (78 aa)). Zn(2+) is bound by residues Cys144, Cys147, Cys160, Cys163, Cys182, Cys185, Cys196, and Cys199. 4 CXXCXGXG motif repeats span residues 144 to 151 (CAPCHGSG), 160 to 167 (CGTCHGRG), 182 to 189 (CPHCDGRG), and 196 to 203 (CKTCHGAG).

The protein belongs to the DnaJ family. Homodimer. Zn(2+) serves as cofactor.

The protein localises to the cytoplasm. Participates actively in the response to hyperosmotic and heat shock by preventing the aggregation of stress-denatured proteins and by disaggregating proteins, also in an autonomous, DnaK-independent fashion. Unfolded proteins bind initially to DnaJ; upon interaction with the DnaJ-bound protein, DnaK hydrolyzes its bound ATP, resulting in the formation of a stable complex. GrpE releases ADP from DnaK; ATP binding to DnaK triggers the release of the substrate protein, thus completing the reaction cycle. Several rounds of ATP-dependent interactions between DnaJ, DnaK and GrpE are required for fully efficient folding. Also involved, together with DnaK and GrpE, in the DNA replication of plasmids through activation of initiation proteins. This chain is Chaperone protein DnaJ, found in Xanthomonas euvesicatoria pv. vesicatoria (strain 85-10) (Xanthomonas campestris pv. vesicatoria).